Here is a 259-residue protein sequence, read N- to C-terminus: 14-3-3-like protein (259 aa).

Residues 237–259 (DTTDDAEDEIREGSKQESGDGQQ) form a disordered region. Residues 247–259 (REGSKQESGDGQQ) show a composition bias toward basic and acidic residues.

Belongs to the 14-3-3 family. Leaves specific.

This is 14-3-3-like protein from Solanum tuberosum (Potato).